The primary structure comprises 232 residues: Ribose-5-phosphate isomerase A (232 aa).

Substrate contacts are provided by residues 31–34 (TGST), 87–90 (DGAD), and 100–103 (KGGG). The Proton acceptor role is filled by Glu-109. Position 127 (Lys-127) interacts with substrate.

It belongs to the ribose 5-phosphate isomerase family. As to quaternary structure, homodimer.

It carries out the reaction aldehydo-D-ribose 5-phosphate = D-ribulose 5-phosphate. It functions in the pathway carbohydrate degradation; pentose phosphate pathway; D-ribose 5-phosphate from D-ribulose 5-phosphate (non-oxidative stage): step 1/1. Catalyzes the reversible conversion of ribose-5-phosphate to ribulose 5-phosphate. In Bifidobacterium adolescentis (strain ATCC 15703 / DSM 20083 / NCTC 11814 / E194a), this protein is Ribose-5-phosphate isomerase A.